We begin with the raw amino-acid sequence, 1479 residues long: Type VII secretion system protein EssC (1479 aa).

At 1-229 (MHKLIIKYNK…RPPQPIQKNN (229 aa)) the chain is on the cytoplasmic side. Residues 230-252 (TVIWRSIIPPLVMIALTVVIFLV) traverse the membrane as a helical segment. Topologically, residues 253–256 (RPIG) are extracellular. Residues 257–279 (IYILMMIGMSTVTIVFGITTYFS) form a helical membrane-spanning segment. Residues 280-1479 (EKKKYNKDVE…QAYQKIRWFK (1200 aa)) are Cytoplasmic-facing. FtsK domains lie at 652 to 846 (DDIL…QDSN) and 997 to 1183 (QGPM…SEVS). ATP contacts are provided by residues 672 to 679 (GTTGSGKS) and 1014 to 1021 (GSPGYGRT).

Belongs to the EssC family. In terms of assembly, homooligomer. Interacts with EsaE.

It is found in the cell membrane. Component of the type VII secretion system (Ess). Required for the secretion of substrates including EsxA and EsxB. However, unable to support secretion of the substrate protein EsxC. This is Type VII secretion system protein EssC from Staphylococcus aureus (strain Mu50 / ATCC 700699).